The sequence spans 879 residues: Prostaglandin F2 receptor negative regulator (879 aa).

The signal sequence occupies residues 1–21; that stretch reads MGRPAPRPLLLALLSLAVCRG. Ig-like C2-type domains lie at 22–129 and 149–268; these read RVVR…ATVQ and PSSR…KAVE. Residues 22–832 are Extracellular-facing; it reads RVVRVPAGTL…MDVLNAFKYP (811 aa). 2 disulfide bridges follow: Cys-43–Cys-119 and Cys-169–Cys-247. An N-linked (GlcNAc...) asparagine glycan is attached at Asn-44. The Cell attachment site motif lies at 89 to 91; that stretch reads RGD. Thr-271 is modified (phosphothreonine). Ig-like C2-type domains follow at residues 276-389, 406-527, 544-662, and 688-813; these read PTAL…WHKV, PEYQ…RNSS, ASED…AWSP, and PIFN…AEIH. Cysteines 299 and 373 form a disulfide. N-linked (GlcNAc...) asparagine glycosylation is found at Asn-300, Asn-383, and Asn-413. Positions 424-427 match the Endoplasmic reticulum retention signal motif; the sequence is PTEL. A disulfide bridge connects residues Cys-429 and Cys-515. Residues Asn-525, Asn-600, Asn-618, and Asn-691 are each glycosylated (N-linked (GlcNAc...) asparagine). Cys-571 and Cys-655 are joined by a disulfide. Positions 703–705 match the Cell attachment site motif; sequence RGD. Cys-711 and Cys-793 form a disulfide bridge. A helical membrane pass occupies residues 833–853; that stretch reads LLIGVGLSTVIGLLSCLIGYC. Residues 854 to 879 lie on the Cytoplasmic side of the membrane; sequence SSHWCCKKEVRETRRERRRLMSMEMD.

Interacts with CD9 and CD81. Part of a complex composed of CD9, CD81 and IGSF8. Also seems to interact with CD63, CD82 and CD151. In terms of tissue distribution, reproductive tissues, lung and heart.

The protein resides in the endoplasmic reticulum membrane. It is found in the golgi apparatus. It localises to the trans-Golgi network membrane. In terms of biological role, inhibits the binding of prostaglandin F2-alpha (PGF2-alpha) to its specific FP receptor, by decreasing the receptor number rather than the affinity constant. Functional coupling with the prostaglandin F2-alpha receptor seems to occur. In myoblasts, associates with tetraspanins CD9 and CD81 to prevent myotube fusion during muscle regeneration. The chain is Prostaglandin F2 receptor negative regulator (Ptgfrn) from Rattus norvegicus (Rat).